A 457-amino-acid polypeptide reads, in one-letter code: Ribulose bisphosphate carboxylase-like protein (457 aa).

Mg(2+) contacts are provided by lysine 199, aspartate 201, and glutamate 202. The residue at position 199 (lysine 199) is an N6-carboxylysine. The tract at residues alanine 426–serine 457 is disordered.

Belongs to the RuBisCO large chain family. Type IV subfamily. Mg(2+) serves as cofactor.

In terms of biological role, may be involved in sulfur metabolism and oxidative stress response. Does not show RuBisCO activity. In Allochromatium vinosum (strain ATCC 17899 / DSM 180 / NBRC 103801 / NCIMB 10441 / D) (Chromatium vinosum), this protein is Ribulose bisphosphate carboxylase-like protein.